A 486-amino-acid polypeptide reads, in one-letter code: Probable glycine dehydrogenase (decarboxylating) subunit 2 (486 aa).

The tract at residues 1-26 (MLIFESSRPGRQARAQAPKPTAATND) is disordered. An N6-(pyridoxal phosphate)lysine modification is found at lysine 264.

This sequence belongs to the GcvP family. C-terminal subunit subfamily. The glycine cleavage system is composed of four proteins: P, T, L and H. In this organism, the P 'protein' is a heterodimer of two subunits. Pyridoxal 5'-phosphate serves as cofactor.

The enzyme catalyses N(6)-[(R)-lipoyl]-L-lysyl-[glycine-cleavage complex H protein] + glycine + H(+) = N(6)-[(R)-S(8)-aminomethyldihydrolipoyl]-L-lysyl-[glycine-cleavage complex H protein] + CO2. In terms of biological role, the glycine cleavage system catalyzes the degradation of glycine. The P protein binds the alpha-amino group of glycine through its pyridoxal phosphate cofactor; CO(2) is released and the remaining methylamine moiety is then transferred to the lipoamide cofactor of the H protein. This Nitrosococcus oceani (strain ATCC 19707 / BCRC 17464 / JCM 30415 / NCIMB 11848 / C-107) protein is Probable glycine dehydrogenase (decarboxylating) subunit 2.